Reading from the N-terminus, the 367-residue chain is MKNVGFIGWRGMVGSVLMQRMVEERDFDAIRPVFFSTSQLGQAAPSFGGTTGTLQDAFDLEALKALDIIVTCQGGDYTNEIYPKLRESGWQGYWIDAASSLRMKDDAIIILDPVNQDVITDGLNNGIRTFVGGNCTVSLMLMSLGGLFANDLVDWVSVATYQAASGGGARHMRELLTQMGHLYGHVADELATPSSAILDIERKVTTLTRSGELPVDNFGVPLAGSLIPWIDKQLDNGQSREEWKGQAETNKILNTSSVIPVDGLCVRVGALRCHSQAFTIKLKKDVSIPTVEELLAAHNPWAKVVPNDREITMRELTPAAVTGTLTTPVGRLRKLNMGPEFLSAFTVGDQLLWGAAEPLRRMLRQLA.

NADP(+)-binding positions include 10-13 (RGMV), 37-38 (TS), and glutamine 73. Residue arginine 102 coordinates phosphate. The active-site Acyl-thioester intermediate is the cysteine 135. S-cysteinyl cysteine; in inhibited form is present on cysteine 135. Residue glutamine 162 coordinates substrate. NADP(+) is bound by residues 165-169 (SGGGA), arginine 173, and proline 193. Substrate is bound at residue glutamate 241. Residue lysine 244 coordinates phosphate. Residue arginine 267 participates in substrate binding. The active-site Proton acceptor is histidine 274. Glutamine 350 is an NADP(+) binding site.

It belongs to the aspartate-semialdehyde dehydrogenase family. As to quaternary structure, homodimer.

The catalysed reaction is L-aspartate 4-semialdehyde + phosphate + NADP(+) = 4-phospho-L-aspartate + NADPH + H(+). Its pathway is amino-acid biosynthesis; L-lysine biosynthesis via DAP pathway; (S)-tetrahydrodipicolinate from L-aspartate: step 2/4. It participates in amino-acid biosynthesis; L-methionine biosynthesis via de novo pathway; L-homoserine from L-aspartate: step 2/3. It functions in the pathway amino-acid biosynthesis; L-threonine biosynthesis; L-threonine from L-aspartate: step 2/5. Is inhibited by L- and D-cystine, and by other cystine derivatives, via the formation of a covalently bound cysteine at the active site Cys-135. Catalyzes the NADPH-dependent formation of L-aspartate-semialdehyde (L-ASA) by the reductive dephosphorylation of L-aspartyl-4-phosphate. The polypeptide is Aspartate-semialdehyde dehydrogenase (Escherichia coli (strain K12)).